We begin with the raw amino-acid sequence, 255 residues long: Ribonuclease PH (255 aa).

Residues arginine 86 and 124 to 126 contribute to the phosphate site; that span reads GTR.

Belongs to the RNase PH family. Homohexameric ring arranged as a trimer of dimers.

The enzyme catalyses tRNA(n+1) + phosphate = tRNA(n) + a ribonucleoside 5'-diphosphate. Functionally, phosphorolytic 3'-5' exoribonuclease that plays an important role in tRNA 3'-end maturation. Removes nucleotide residues following the 3'-CCA terminus of tRNAs; can also add nucleotides to the ends of RNA molecules by using nucleoside diphosphates as substrates, but this may not be physiologically important. Probably plays a role in initiation of 16S rRNA degradation (leading to ribosome degradation) during starvation. This is Ribonuclease PH from Geobacillus thermodenitrificans (strain NG80-2).